Reading from the N-terminus, the 333-residue chain is Nucleoid-associated protein APJL_0454 (333 aa).

This sequence belongs to the YejK family.

It localises to the cytoplasm. It is found in the nucleoid. The protein is Nucleoid-associated protein APJL_0454 of Actinobacillus pleuropneumoniae serotype 3 (strain JL03).